The sequence spans 446 residues: tRNA-2-methylthio-N(6)-dimethylallyladenosine synthase (446 aa).

Positions Lys-2 to Glu-122 constitute an MTTase N-terminal domain. 6 residues coordinate [4Fe-4S] cluster: Cys-11, Cys-47, Cys-85, Cys-157, Cys-161, and Cys-164. Positions Arg-143–Ala-375 constitute a Radical SAM core domain. One can recognise a TRAM domain in the interval Ala-378–Glu-440.

Belongs to the methylthiotransferase family. MiaB subfamily. Monomer. It depends on [4Fe-4S] cluster as a cofactor.

The protein resides in the cytoplasm. The enzyme catalyses N(6)-dimethylallyladenosine(37) in tRNA + (sulfur carrier)-SH + AH2 + 2 S-adenosyl-L-methionine = 2-methylsulfanyl-N(6)-dimethylallyladenosine(37) in tRNA + (sulfur carrier)-H + 5'-deoxyadenosine + L-methionine + A + S-adenosyl-L-homocysteine + 2 H(+). Its function is as follows. Catalyzes the methylthiolation of N6-(dimethylallyl)adenosine (i(6)A), leading to the formation of 2-methylthio-N6-(dimethylallyl)adenosine (ms(2)i(6)A) at position 37 in tRNAs that read codons beginning with uridine. This Methylorubrum extorquens (strain PA1) (Methylobacterium extorquens) protein is tRNA-2-methylthio-N(6)-dimethylallyladenosine synthase.